Consider the following 256-residue polypeptide: 5-oxoprolinase subunit A (256 aa).

Belongs to the LamB/PxpA family. In terms of assembly, forms a complex composed of PxpA, PxpB and PxpC.

The catalysed reaction is 5-oxo-L-proline + ATP + 2 H2O = L-glutamate + ADP + phosphate + H(+). In terms of biological role, catalyzes the cleavage of 5-oxoproline to form L-glutamate coupled to the hydrolysis of ATP to ADP and inorganic phosphate. This Alkaliphilus metalliredigens (strain QYMF) protein is 5-oxoprolinase subunit A.